Consider the following 406-residue polypeptide: MASGVRQELAQLMNSSGSHKDLAGKYRQILEKALQFTDAEQLEALKAFVEAMVNENVSLVISRQLLTDFCAHLPNLPDDIAKVVCHFTLEKIQPRVISFEEQVASIRQHLATIYEKQEDWRNAAQVLVGIPLETGQKQYNVDYKLDTYLKIARLYLEDDDPVQAEAYINRASLLQNESTNEQLQIHYKVCYARVLDYRRKFIEAAQRYNELSYKSIVHETERLEALKHALHCTILASAGQQRSRMLATLFKDERCQQLAAYGILEKMYLDRIIRGNQLQEFAAMLMPHQKATTADGSSILDRAVIEHNLLSASKLYNNITFEELGALLEIPPAKAEKIASQMITEGRMNGFIDQIDGIVHFETREPLPTWDKQIQSLCFQVNNLLEKISQTAPEWTAQAIEAQMSQ.

The PCI domain maps to 197-366 (YRRKFIEAAQ…GIVHFETREP (170 aa)).

The protein belongs to the CSN4 family. In terms of assembly, component of the CSN complex, probably composed of cops1, cops2, cops3, cops4, cops5, cops6, cops7, cops8 and cops9.

The protein resides in the cytoplasm. The protein localises to the nucleus. It is found in the cytoplasmic vesicle. Its subcellular location is the secretory vesicle. It localises to the synaptic vesicle. Its function is as follows. Component of the COP9 signalosome complex (CSN), a complex involved in various cellular and developmental processes. The CSN complex is an essential regulator of the ubiquitin (Ubl) conjugation pathway by mediating the deneddylation of the cullin subunits of E3 ligase complexes, leading to modify the Ubl ligase activity. In Danio rerio (Zebrafish), this protein is COP9 signalosome complex subunit 4 (cops4).